The sequence spans 97 residues: Sperm protein associated with the nucleus on the X chromosome A (97 aa).

A disordered region spans residues 1 to 49 (MDKQSSAGGVKRSVPCDSNEANEMMPETPTGDSDPQPAPKKMKTSESST). Residues 37–45 (PAPKKMKTS) carry the Nuclear localization signal motif.

This sequence belongs to the SPAN-X family. Detected in testis and sperm.

The protein localises to the cytoplasm. It localises to the nucleus. This chain is Sperm protein associated with the nucleus on the X chromosome A, found in Homo sapiens (Human).